A 145-amino-acid polypeptide reads, in one-letter code: Anaerobic nitrite reductase NSHB5 (145 aa).

Positions 2–142 constitute a Globin domain; sequence GFSETQEELV…LAAAIKEEMK (141 aa). The Homodimerization motif lies at 35–39; it reads EIAPA. The heme b site is built by Ser-45, His-59, Lys-61, Arg-84, Thr-88, and His-89. The Homodimerization signature appears at 96–108; it reads DAYFEVVKTALLD.

This sequence belongs to the plant globin family. In terms of assembly, homodimer. Requires heme b as cofactor. Expressed in embryonic (embryos, coleoptiles and seminal roots) and vegetative (leaves and roots) organs.

It localises to the cytoplasm. It is found in the nucleus. It catalyses the reaction Fe(III)-heme b-[protein] + nitric oxide + H2O = Fe(II)-heme b-[protein] + nitrite + 2 H(+). Its function is as follows. Phytoglobin that reduces nitrite to nitric oxide under anoxic conditions (e.g. during flooding or in waterlogged soil). May not function as an oxygen storage or transport protein. Has an unusually high affinity for O(2) through an hexacoordinate heme iron because of a very low dissociation constant. This chain is Anaerobic nitrite reductase NSHB5, found in Oryza sativa subsp. japonica (Rice).